The following is a 559-amino-acid chain: POU domain protein 1 (559 aa).

Residues 259 to 333 (EDLPSSDDLE…LLQKWLHEAD (75 aa)) form the POU-specific domain. A DNA-binding region (homeobox) is located at residues 351 to 410 (KRKKRTSIEANVKSILESSFMKLSKPSAQDISSLAEKLSLEKEVVRVWFCNRRQKEKRIT).

It belongs to the POU transcription factor family.

The protein resides in the nucleus. The chain is POU domain protein 1 (POU1) from Dugesia japonica (Planarian).